Reading from the N-terminus, the 421-residue chain is Aspartokinase (421 aa).

An ATP-binding site is contributed by 7-10; the sequence is KYGG. 25-30 serves as a coordination point for substrate; it reads RIVATK. S41 is a binding site for ATP. Substrate is bound by residues 45–49, E74, 125–126, 151–154, and S154; these read DTTDE, LD, and RGGS. ATP is bound by residues 174-175, 180-185, and K210; these read SD and YTADPR. ACT domains follow at residues 267-343 and 349-421; these read VTVL…YDDQ and LVGA…GTGR. Substrate contacts are provided by residues D274, 274 to 279, 292 to 294, Q298, 360 to 361, 374 to 375, and 381 to 382; these read DKPGEA, NID, VT, NV, and SE.

Belongs to the aspartokinase family. In terms of assembly, tetramer consisting of 2 isoforms Alpha (catalytic and regulation) and of a homodimer of 2 isoforms Beta (regulation).

The enzyme catalyses L-aspartate + ATP = 4-phospho-L-aspartate + ADP. It functions in the pathway amino-acid biosynthesis; L-lysine biosynthesis via DAP pathway; (S)-tetrahydrodipicolinate from L-aspartate: step 1/4. Its pathway is amino-acid biosynthesis; L-methionine biosynthesis via de novo pathway; L-homoserine from L-aspartate: step 1/3. The protein operates within amino-acid biosynthesis; L-threonine biosynthesis; L-threonine from L-aspartate: step 1/5. Functionally, catalyzes the phosphorylation of the beta-carboxyl group of aspartic acid with ATP to yield 4-phospho-L-aspartate, which is involved in the branched biosynthetic pathway leading to the biosynthesis of amino acids lysine, threonine, isoleucine and methionine. The protein is Aspartokinase (lysC) of Corynebacterium efficiens (strain DSM 44549 / YS-314 / AJ 12310 / JCM 11189 / NBRC 100395).